The primary structure comprises 314 residues: tRNA-cytidine(32) 2-sulfurtransferase (314 aa).

The short motif at 39–44 (SGGKDS) is the PP-loop motif element. Positions 114, 117, and 205 each coordinate [4Fe-4S] cluster.

It belongs to the TtcA family. In terms of assembly, homodimer. Mg(2+) is required as a cofactor. It depends on [4Fe-4S] cluster as a cofactor.

The protein resides in the cytoplasm. It catalyses the reaction cytidine(32) in tRNA + S-sulfanyl-L-cysteinyl-[cysteine desulfurase] + AH2 + ATP = 2-thiocytidine(32) in tRNA + L-cysteinyl-[cysteine desulfurase] + A + AMP + diphosphate + H(+). Its pathway is tRNA modification. In terms of biological role, catalyzes the ATP-dependent 2-thiolation of cytidine in position 32 of tRNA, to form 2-thiocytidine (s(2)C32). The sulfur atoms are provided by the cysteine/cysteine desulfurase (IscS) system. The chain is tRNA-cytidine(32) 2-sulfurtransferase from Cupriavidus necator (strain ATCC 17699 / DSM 428 / KCTC 22496 / NCIMB 10442 / H16 / Stanier 337) (Ralstonia eutropha).